The sequence spans 361 residues: Histidinol-phosphate aminotransferase (361 aa).

Residue lysine 218 is modified to N6-(pyridoxal phosphate)lysine.

It belongs to the class-II pyridoxal-phosphate-dependent aminotransferase family. Histidinol-phosphate aminotransferase subfamily. As to quaternary structure, homodimer. The cofactor is pyridoxal 5'-phosphate.

The enzyme catalyses L-histidinol phosphate + 2-oxoglutarate = 3-(imidazol-4-yl)-2-oxopropyl phosphate + L-glutamate. It functions in the pathway amino-acid biosynthesis; L-histidine biosynthesis; L-histidine from 5-phospho-alpha-D-ribose 1-diphosphate: step 7/9. This is Histidinol-phosphate aminotransferase from Ruegeria pomeroyi (strain ATCC 700808 / DSM 15171 / DSS-3) (Silicibacter pomeroyi).